We begin with the raw amino-acid sequence, 368 residues long: Dihydroorotate dehydrogenase (quinone) (368 aa).

FMN is bound by residues 67-71 and threonine 91; that span reads AGFDK. A substrate-binding site is contributed by lysine 71. Residue 116–120 coordinates substrate; that stretch reads NRMGF. The FMN site is built by asparagine 146 and asparagine 179. Asparagine 179 serves as a coordination point for substrate. Catalysis depends on serine 182, which acts as the Nucleophile. Asparagine 184 is a binding site for substrate. FMN contacts are provided by lysine 222 and threonine 250. Position 251–252 (251–252) interacts with substrate; the sequence is NT. FMN is bound by residues glycine 276, glycine 305, and 326 to 327; that span reads YS.

The protein belongs to the dihydroorotate dehydrogenase family. Type 2 subfamily. Monomer. The cofactor is FMN.

Its subcellular location is the cell membrane. The enzyme catalyses (S)-dihydroorotate + a quinone = orotate + a quinol. The protein operates within pyrimidine metabolism; UMP biosynthesis via de novo pathway; orotate from (S)-dihydroorotate (quinone route): step 1/1. Functionally, catalyzes the conversion of dihydroorotate to orotate with quinone as electron acceptor. The protein is Dihydroorotate dehydrogenase (quinone) of Streptomyces avermitilis (strain ATCC 31267 / DSM 46492 / JCM 5070 / NBRC 14893 / NCIMB 12804 / NRRL 8165 / MA-4680).